Here is a 347-residue protein sequence, read N- to C-terminus: Holliday junction branch migration complex subunit RuvB (347 aa).

A large ATPase domain (RuvB-L) region spans residues 1 to 183; that stretch reads MTDVPRMVTP…FGIPVRLNFY (183 aa). ATP contacts are provided by residues leucine 22, arginine 23, glycine 64, lysine 67, threonine 68, threonine 69, 130 to 132, arginine 173, tyrosine 183, and arginine 220; that span reads EDF. Residue threonine 68 participates in Mg(2+) binding. A small ATPAse domain (RuvB-S) region spans residues 184–254; sequence TVDELEKIVS…IADHALGALE (71 aa). Residues 257 to 347 form a head domain (RuvB-H) region; it reads AAGLDAMDRR…QFGLFGGEDE (91 aa). DNA-binding residues include arginine 293, arginine 312, and arginine 317.

The protein belongs to the RuvB family. Homohexamer. Forms an RuvA(8)-RuvB(12)-Holliday junction (HJ) complex. HJ DNA is sandwiched between 2 RuvA tetramers; dsDNA enters through RuvA and exits via RuvB. An RuvB hexamer assembles on each DNA strand where it exits the tetramer. Each RuvB hexamer is contacted by two RuvA subunits (via domain III) on 2 adjacent RuvB subunits; this complex drives branch migration. In the full resolvosome a probable DNA-RuvA(4)-RuvB(12)-RuvC(2) complex forms which resolves the HJ.

It is found in the cytoplasm. The catalysed reaction is ATP + H2O = ADP + phosphate + H(+). Functionally, the RuvA-RuvB-RuvC complex processes Holliday junction (HJ) DNA during genetic recombination and DNA repair, while the RuvA-RuvB complex plays an important role in the rescue of blocked DNA replication forks via replication fork reversal (RFR). RuvA specifically binds to HJ cruciform DNA, conferring on it an open structure. The RuvB hexamer acts as an ATP-dependent pump, pulling dsDNA into and through the RuvAB complex. RuvB forms 2 homohexamers on either side of HJ DNA bound by 1 or 2 RuvA tetramers; 4 subunits per hexamer contact DNA at a time. Coordinated motions by a converter formed by DNA-disengaged RuvB subunits stimulates ATP hydrolysis and nucleotide exchange. Immobilization of the converter enables RuvB to convert the ATP-contained energy into a lever motion, pulling 2 nucleotides of DNA out of the RuvA tetramer per ATP hydrolyzed, thus driving DNA branch migration. The RuvB motors rotate together with the DNA substrate, which together with the progressing nucleotide cycle form the mechanistic basis for DNA recombination by continuous HJ branch migration. Branch migration allows RuvC to scan DNA until it finds its consensus sequence, where it cleaves and resolves cruciform DNA. The sequence is that of Holliday junction branch migration complex subunit RuvB from Nitrobacter hamburgensis (strain DSM 10229 / NCIMB 13809 / X14).